The sequence spans 549 residues: Glucose-6-phosphate isomerase (549 aa).

The active-site Proton donor is the E355. Active-site residues include H387 and K515.

Belongs to the GPI family.

Its subcellular location is the cytoplasm. It carries out the reaction alpha-D-glucose 6-phosphate = beta-D-fructose 6-phosphate. It functions in the pathway carbohydrate biosynthesis; gluconeogenesis. Its pathway is carbohydrate degradation; glycolysis; D-glyceraldehyde 3-phosphate and glycerone phosphate from D-glucose: step 2/4. Catalyzes the reversible isomerization of glucose-6-phosphate to fructose-6-phosphate. The chain is Glucose-6-phosphate isomerase from Pasteurella multocida (strain Pm70).